The sequence spans 364 residues: Methylthioribose-1-phosphate isomerase (364 aa).

D254 acts as the Proton donor in catalysis.

The protein belongs to the eIF-2B alpha/beta/delta subunits family. MtnA subfamily.

It is found in the cytoplasm. Its subcellular location is the nucleus. It catalyses the reaction 5-(methylsulfanyl)-alpha-D-ribose 1-phosphate = 5-(methylsulfanyl)-D-ribulose 1-phosphate. It participates in amino-acid biosynthesis; L-methionine biosynthesis via salvage pathway; L-methionine from S-methyl-5-thio-alpha-D-ribose 1-phosphate: step 1/6. Its function is as follows. Catalyzes the interconversion of methylthioribose-1-phosphate (MTR-1-P) into methylthioribulose-1-phosphate (MTRu-1-P). The sequence is that of Methylthioribose-1-phosphate isomerase from Drosophila erecta (Fruit fly).